A 478-amino-acid chain; its full sequence is Probable sodium/glutamine symporter GlnT (478 aa).

Transmembrane regions (helical) follow at residues 14–34, 85–105, 145–165, 185–205, 211–231, 236–256, 298–318, 342–362, 381–401, and 411–431; these read DLLW…YFTF, IAIA…IIAI, WMGA…FNSV, LGLI…KRIA, IVVV…FSNI, GVLA…GGAL, AFGV…IILF, GSWA…CALI, LIFV…VAKV, and FMGL…KVVF.

It belongs to the alanine or glycine:cation symporter (AGCS) (TC 2.A.25) family.

The protein localises to the cell membrane. Probably functions as a sodium/glutamine symporter for glutamine uptake. The chain is Probable sodium/glutamine symporter GlnT (glnT) from Bacillus subtilis (strain 168).